Reading from the N-terminus, the 195-residue chain is Imidazoleglycerol-phosphate dehydratase (195 aa).

It belongs to the imidazoleglycerol-phosphate dehydratase family.

It localises to the cytoplasm. The catalysed reaction is D-erythro-1-(imidazol-4-yl)glycerol 3-phosphate = 3-(imidazol-4-yl)-2-oxopropyl phosphate + H2O. The protein operates within amino-acid biosynthesis; L-histidine biosynthesis; L-histidine from 5-phospho-alpha-D-ribose 1-diphosphate: step 6/9. The polypeptide is Imidazoleglycerol-phosphate dehydratase (Deinococcus deserti (strain DSM 17065 / CIP 109153 / LMG 22923 / VCD115)).